The chain runs to 129 residues: Translation initiation factor 5A (129 aa).

Lys-36 carries the post-translational modification Hypusine.

This sequence belongs to the eIF-5A family.

The protein localises to the cytoplasm. Functions by promoting the formation of the first peptide bond. The sequence is that of Translation initiation factor 5A (eIF5A) from Methanobrevibacter smithii (strain ATCC 35061 / DSM 861 / OCM 144 / PS).